The primary structure comprises 556 residues: 2-succinyl-5-enolpyruvyl-6-hydroxy-3-cyclohexene-1-carboxylate synthase (556 aa).

It belongs to the TPP enzyme family. MenD subfamily. As to quaternary structure, homodimer. The cofactor is Mg(2+). Mn(2+) is required as a cofactor. It depends on thiamine diphosphate as a cofactor.

The catalysed reaction is isochorismate + 2-oxoglutarate + H(+) = 5-enolpyruvoyl-6-hydroxy-2-succinyl-cyclohex-3-ene-1-carboxylate + CO2. Its pathway is quinol/quinone metabolism; 1,4-dihydroxy-2-naphthoate biosynthesis; 1,4-dihydroxy-2-naphthoate from chorismate: step 2/7. It functions in the pathway quinol/quinone metabolism; menaquinone biosynthesis. In terms of biological role, catalyzes the thiamine diphosphate-dependent decarboxylation of 2-oxoglutarate and the subsequent addition of the resulting succinic semialdehyde-thiamine pyrophosphate anion to isochorismate to yield 2-succinyl-5-enolpyruvyl-6-hydroxy-3-cyclohexene-1-carboxylate (SEPHCHC). This is 2-succinyl-5-enolpyruvyl-6-hydroxy-3-cyclohexene-1-carboxylate synthase from Enterobacter sp. (strain 638).